The sequence spans 601 residues: Phosphomethylpyrimidine synthase (601 aa).

Disordered regions lie at residues 1–31 (MTNKDARTPASSQTGEALASPQGDQEAGKSI) and 100–141 (AGRP…RDGQ). Residues 100 to 112 (AGRPVRPEDDGIK) show a composition bias toward basic and acidic residues. Residues N208, M237, Y266, H302, 322-324 (SRG), 363-366 (DGLR), and E402 contribute to the substrate site. Residue H406 coordinates Zn(2+). Position 429 (Y429) interacts with substrate. H470 contributes to the Zn(2+) binding site. Positions 550, 553, and 558 each coordinate [4Fe-4S] cluster.

Belongs to the ThiC family. It depends on [4Fe-4S] cluster as a cofactor.

The catalysed reaction is 5-amino-1-(5-phospho-beta-D-ribosyl)imidazole + S-adenosyl-L-methionine = 4-amino-2-methyl-5-(phosphooxymethyl)pyrimidine + CO + 5'-deoxyadenosine + formate + L-methionine + 3 H(+). Its pathway is cofactor biosynthesis; thiamine diphosphate biosynthesis. In terms of biological role, catalyzes the synthesis of the hydroxymethylpyrimidine phosphate (HMP-P) moiety of thiamine from aminoimidazole ribotide (AIR) in a radical S-adenosyl-L-methionine (SAM)-dependent reaction. The polypeptide is Phosphomethylpyrimidine synthase (Streptomyces avermitilis (strain ATCC 31267 / DSM 46492 / JCM 5070 / NBRC 14893 / NCIMB 12804 / NRRL 8165 / MA-4680)).